The following is a 393-amino-acid chain: Rubredoxin-NAD(+) reductase (393 aa).

FAD-binding positions include serine 9–alanine 12, cysteine 33–alanine 34, lysine 42, valine 80, glutamate 162, aspartate 282, valine 294, and lysine 325.

It belongs to the FAD-dependent oxidoreductase family. Homodimer. The cofactor is FAD.

The protein localises to the cytoplasm. It carries out the reaction 2 reduced [rubredoxin] + NAD(+) + H(+) = 2 oxidized [rubredoxin] + NADH. It functions in the pathway hydrocarbon metabolism; alkane degradation. Functionally, involved in the hydrocarbon hydroxylating system, which transfers electrons from NADH to rubredoxin reductase and then through rubredoxin to alkane 1 monooxygenase. The chain is Rubredoxin-NAD(+) reductase (rubB) from Acinetobacter baylyi (strain ATCC 33305 / BD413 / ADP1).